The sequence spans 283 residues: Bis(5'-nucleosyl)-tetraphosphatase, symmetrical (283 aa).

Belongs to the Ap4A hydrolase family.

The catalysed reaction is P(1),P(4)-bis(5'-adenosyl) tetraphosphate + H2O = 2 ADP + 2 H(+). Its function is as follows. Hydrolyzes diadenosine 5',5'''-P1,P4-tetraphosphate to yield ADP. The sequence is that of Bis(5'-nucleosyl)-tetraphosphatase, symmetrical from Cronobacter sakazakii (strain ATCC BAA-894) (Enterobacter sakazakii).